Here is a 759-residue protein sequence, read N- to C-terminus: DNA replication licensing factor mcm-5 (759 aa).

Positions 330 to 536 constitute an MCM domain; the sequence is AYELIAKSIA…KDATLAKHVI (207 aa). Arg-370 contributes to the ADP binding site. The short motif at 511–514 is the Arginine finger element; that stretch reads SRFD.

The protein belongs to the MCM family. Component of the mcm2-7 complex. The complex forms a toroidal hexameric ring with the proposed subunit order mcm2-mcm6-mcm4-mcm7-mcm3-mcm5 (By simililarity).

It localises to the nucleus. The protein localises to the cytoplasm. The protein resides in the cytosol. The catalysed reaction is ATP + H2O = ADP + phosphate + H(+). Its function is as follows. Acts as a component of the MCM2-7 complex (MCM complex) which is the replicative helicase essential for 'once per cell cycle' DNA replication initiation and elongation in eukaryotic cells. Core component of CDC45-MCM-GINS (CMG) helicase, the molecular machine that unwinds template DNA during replication, and around which the replisome is built. The active ATPase sites in the MCM2-7 ring are formed through the interaction surfaces of two neighboring subunits such that a critical structure of a conserved arginine finger motif is provided in trans relative to the ATP-binding site of the Walker A box of the adjacent subunit. The six ATPase active sites, however, are likely to contribute differentially to the complex helicase activity. The chain is DNA replication licensing factor mcm-5 (mcm-5) from Caenorhabditis elegans.